A 615-amino-acid chain; its full sequence is MPELRSRTSTHGRTMAGARALWRATGMTDDDFGKPIVAIANSFTQFVPGHVHLKDLGGLVADAVAEAGGVGREFNTIAVDDGIAMGHGGMLYSLPSRELIADAVEYMVNAHCADALVCISNCDKITPGMLLAALRLNIPTVFVSGGPMEAGKTVAIEGIVHSKIDLIDAMIAASNEAVTDDQLDQIERSACPTCGSCSGMFTANSMNCLTEAIGLALPGNGSTLATHAARRSLFVDAGRTVVEIAKRWYDGDDATVLPRAVANRAAFENAVALDVAMGGSTNTILHLLAAAREAELDFGVADIDTISRRVPCLAKVAPNSPLYHMEDVHRAGGIPAILGELDRAGLLNREVHAVHSPSLATWLADWDVRGDAATPEAVDLFHAAPGGVRTVEPFSTTNRWSTLDTDAAGGCVRDRAHAYTADGGLAILHGNLAPDGCVVKTAGVPEECLTFRGPARVYESQDDAVAAILAKEVTAGDVVVIRYEGPRGGPGMQEMLYPTSFLKGRGLGRACALLTDGRFSGGTSGLSIGHVSPEAAAGGLIALVEPGDEIVIDIPNRTIELAVPADVLDARRVAQEKRDRPYTPADRQRPVSAALRAYASMATSASDGAYRRVPE.

Asp-81 is a Mg(2+) binding site. A [2Fe-2S] cluster-binding site is contributed by Cys-122. Residues Asp-123 and Lys-124 each coordinate Mg(2+). N6-carboxylysine is present on Lys-124. Cys-197 lines the [2Fe-2S] cluster pocket. A Mg(2+)-binding site is contributed by Glu-494. Ser-520 (proton acceptor) is an active-site residue.

It belongs to the IlvD/Edd family. In terms of assembly, homodimer. [2Fe-2S] cluster serves as cofactor. The cofactor is Mg(2+).

The enzyme catalyses (2R)-2,3-dihydroxy-3-methylbutanoate = 3-methyl-2-oxobutanoate + H2O. It catalyses the reaction (2R,3R)-2,3-dihydroxy-3-methylpentanoate = (S)-3-methyl-2-oxopentanoate + H2O. Its pathway is amino-acid biosynthesis; L-isoleucine biosynthesis; L-isoleucine from 2-oxobutanoate: step 3/4. The protein operates within amino-acid biosynthesis; L-valine biosynthesis; L-valine from pyruvate: step 3/4. Its function is as follows. Functions in the biosynthesis of branched-chain amino acids. Catalyzes the dehydration of (2R,3R)-2,3-dihydroxy-3-methylpentanoate (2,3-dihydroxy-3-methylvalerate) into 2-oxo-3-methylpentanoate (2-oxo-3-methylvalerate) and of (2R)-2,3-dihydroxy-3-methylbutanoate (2,3-dihydroxyisovalerate) into 2-oxo-3-methylbutanoate (2-oxoisovalerate), the penultimate precursor to L-isoleucine and L-valine, respectively. This Salinispora arenicola (strain CNS-205) protein is Dihydroxy-acid dehydratase.